Reading from the N-terminus, the 163-residue chain is Putative pre-16S rRNA nuclease (163 aa).

Belongs to the YqgF nuclease family.

The protein localises to the cytoplasm. Functionally, could be a nuclease involved in processing of the 5'-end of pre-16S rRNA. This Rhizobium leguminosarum bv. trifolii (strain WSM2304) protein is Putative pre-16S rRNA nuclease.